Reading from the N-terminus, the 517-residue chain is Arp2/3 complex-activating protein rickA (517 aa).

Disordered regions lie at residues 313–441 and 461–517; these read LENN…SKPA and KVSD…SFVR. Composition is skewed to pro residues over residues 319–340 and 347–378; these read PPSP…PSPL and SSPP…PPMA. In terms of domain architecture, WH2 spans 406 to 423; it reads DTSDLMREIAGPKKLKKV. The tract at residues 444–477 is central and acidic domains; that stretch reads VNALSGLESIFARRAVIKVSDSSSSESDSGNWSD. The segment covering 463 to 479 has biased composition (low complexity); that stretch reads SDSSSSESDSGNWSDVS. Over residues 500 to 517 the composition is skewed to polar residues; sequence THAQKINNRNSQNPSFVR.

In terms of assembly, homodimer.

It is found in the cell surface. Functionally, recruits and activates the Arp2/3 complex, which in turn leads to actin polymerization, promoting Rickettsia motility during infection. The sequence is that of Arp2/3 complex-activating protein rickA (rickA) from Rickettsia conorii (strain ATCC VR-613 / Malish 7).